The following is a 305-amino-acid chain: Protoheme IX farnesyltransferase (305 aa).

9 consecutive transmembrane segments (helical) span residues 29–49 (LIVF…PGLA), 55–75 (LWAT…NCLI), 101–121 (ALIF…EAVN), 123–143 (LTAW…TVVL), 151–171 (IVIG…AMTG), 177–197 (GLIL…ALAL), 219–241 (FTRL…PFVQ), 246–268 (WLYL…RLWR), and 283–303 (IWHL…QDLL).

This sequence belongs to the UbiA prenyltransferase family. Protoheme IX farnesyltransferase subfamily.

It localises to the cell inner membrane. It catalyses the reaction heme b + (2E,6E)-farnesyl diphosphate + H2O = Fe(II)-heme o + diphosphate. It functions in the pathway porphyrin-containing compound metabolism; heme O biosynthesis; heme O from protoheme: step 1/1. In terms of biological role, converts heme B (protoheme IX) to heme O by substitution of the vinyl group on carbon 2 of heme B porphyrin ring with a hydroxyethyl farnesyl side group. This is Protoheme IX farnesyltransferase from Leptothrix cholodnii (strain ATCC 51168 / LMG 8142 / SP-6) (Leptothrix discophora (strain SP-6)).